A 250-amino-acid chain; its full sequence is 5'-nucleotidase SurE (250 aa).

Residues D8, D9, S39, and N95 each contribute to the a divalent metal cation site.

The protein belongs to the SurE nucleotidase family. The cofactor is a divalent metal cation.

The protein localises to the cytoplasm. It carries out the reaction a ribonucleoside 5'-phosphate + H2O = a ribonucleoside + phosphate. Nucleotidase that shows phosphatase activity on nucleoside 5'-monophosphates. The chain is 5'-nucleotidase SurE from Cupriavidus taiwanensis (strain DSM 17343 / BCRC 17206 / CCUG 44338 / CIP 107171 / LMG 19424 / R1) (Ralstonia taiwanensis (strain LMG 19424)).